Consider the following 229-residue polypeptide: 1-(5-phosphoribosyl)-5-[(5-phosphoribosylamino)methylideneamino] imidazole-4-carboxamide isomerase (229 aa).

The active-site Proton acceptor is the D8. D125 functions as the Proton donor in the catalytic mechanism.

This sequence belongs to the HisA/HisF family.

It localises to the cytoplasm. The catalysed reaction is 1-(5-phospho-beta-D-ribosyl)-5-[(5-phospho-beta-D-ribosylamino)methylideneamino]imidazole-4-carboxamide = 5-[(5-phospho-1-deoxy-D-ribulos-1-ylimino)methylamino]-1-(5-phospho-beta-D-ribosyl)imidazole-4-carboxamide. It functions in the pathway amino-acid biosynthesis; L-histidine biosynthesis; L-histidine from 5-phospho-alpha-D-ribose 1-diphosphate: step 4/9. The protein is 1-(5-phosphoribosyl)-5-[(5-phosphoribosylamino)methylideneamino] imidazole-4-carboxamide isomerase of Thermococcus onnurineus (strain NA1).